The chain runs to 1534 residues: Alpha-2-macroglobulin homolog (1534 aa).

A signal peptide spans 1 to 38 (MDTQRFQSQFHWHLSFKFSGAIAACLSLSLVGTGLANA).

Belongs to the protease inhibitor I39 (alpha-2-macroglobulin) family. Bacterial alpha-2-macroglobulin subfamily.

The chain is Alpha-2-macroglobulin homolog (yfaS) from Escherichia coli O157:H7.